The chain runs to 191 residues: Protein YceI (191 aa).

The signal sequence occupies residues 1–22 (MKKSLLGLTFASLMFSAGSAVA).

The protein belongs to the UPF0312 family. Type 1 subfamily.

The protein resides in the periplasm. This Escherichia coli O17:K52:H18 (strain UMN026 / ExPEC) protein is Protein YceI.